Consider the following 1135-residue polypeptide: Envelopment polyprotein (1135 aa).

A signal peptide spans methionine 1–alanine 35. Topologically, residues lysine 36–threonine 314 are lumenal. The short motif at arginine 41 to aspartate 43 is the Cell attachment site element. Asparagine 116 carries N-linked (GlcNAc...) asparagine; by host glycosylation. Cysteine 122 and cysteine 156 are oxidised to a cystine. Residues leucine 177–leucine 195 are non-covalent dimerization. The N-linked (GlcNAc...) asparagine; by host glycan is linked to asparagine 210. The cysteines at positions 224 and 285 are disulfide-linked. Residues alanine 315–cysteine 366 traverse the membrane as a helical segment. At leucine 367–serine 484 the chain is on the cytoplasmic side. Residues leucine 437–serine 484 form a signal for signal peptide peptidase region. Topologically, residues lysine 485–arginine 1067 are lumenal. N-linked (GlcNAc...) asparagine; by host glycans are attached at residues asparagine 588, asparagine 605, and asparagine 980. A helical membrane pass occupies residues valine 1068–isoleucine 1088. The Cytoplasmic portion of the chain corresponds to cysteine 1089–valine 1135.

The protein belongs to the tospovirus envelope glycoprotein family. As to quaternary structure, homodimer; disulfide-linked. Heterodimer with Glycoprotein C. Interacts with nucleoprotein. In terms of assembly, heterodimer with Glycoprotein N. Interacts with nucleoprotein. Post-translationally, specific enzymatic cleavages in vivo yield mature proteins including Glycoprotein N and Glycoprotein C. Glycosylated with O-linked glycans. Glycosylation is essential for proper subcellular location. In terms of processing, cleaved at acidic pH.

It is found in the virion membrane. The protein localises to the host Golgi apparatus membrane. It localises to the host endoplasmic reticulum membrane. In terms of biological role, forms the spikes present at the surface of the virion together with Glycoprotein C. They are able to attach the virion to a cell receptor and to promote fusion of membranes after endocytosis of the virion. Plays a role in virus binding and/or entry into the vector midgut. Functionally, forms the spikes present at the surface of the virion together with Glycoprotein N. They are able to attach the virion to a cell receptor and to promote fusion of membranes after endocytosis of the virion. Probable class II fusion protein. This Frankliniella occidentalis (Western flower thrips) protein is Envelopment polyprotein (GP).